Consider the following 444-residue polypeptide: Tol-Pal system protein TolB (444 aa).

The N-terminal stretch at methionine 1–alanine 19 is a signal peptide.

It belongs to the TolB family. As to quaternary structure, the Tol-Pal system is composed of five core proteins: the inner membrane proteins TolA, TolQ and TolR, the periplasmic protein TolB and the outer membrane protein Pal. They form a network linking the inner and outer membranes and the peptidoglycan layer.

The protein localises to the periplasm. Functionally, part of the Tol-Pal system, which plays a role in outer membrane invagination during cell division and is important for maintaining outer membrane integrity. The protein is Tol-Pal system protein TolB of Rickettsia akari (strain Hartford).